A 210-amino-acid chain; its full sequence is Protein-L-isoaspartate O-methyltransferase (210 aa).

Ser59 is a catalytic residue.

This sequence belongs to the methyltransferase superfamily. L-isoaspartyl/D-aspartyl protein methyltransferase family.

The protein localises to the cytoplasm. The catalysed reaction is [protein]-L-isoaspartate + S-adenosyl-L-methionine = [protein]-L-isoaspartate alpha-methyl ester + S-adenosyl-L-homocysteine. Its function is as follows. Catalyzes the methyl esterification of L-isoaspartyl residues in peptides and proteins that result from spontaneous decomposition of normal L-aspartyl and L-asparaginyl residues. It plays a role in the repair and/or degradation of damaged proteins. In Nitratidesulfovibrio vulgaris (strain ATCC 29579 / DSM 644 / CCUG 34227 / NCIMB 8303 / VKM B-1760 / Hildenborough) (Desulfovibrio vulgaris), this protein is Protein-L-isoaspartate O-methyltransferase.